A 351-amino-acid polypeptide reads, in one-letter code: S-adenosylmethionine:tRNA ribosyltransferase-isomerase (351 aa).

Belongs to the QueA family. In terms of assembly, monomer.

It localises to the cytoplasm. The enzyme catalyses 7-aminomethyl-7-carbaguanosine(34) in tRNA + S-adenosyl-L-methionine = epoxyqueuosine(34) in tRNA + adenine + L-methionine + 2 H(+). It functions in the pathway tRNA modification; tRNA-queuosine biosynthesis. Transfers and isomerizes the ribose moiety from AdoMet to the 7-aminomethyl group of 7-deazaguanine (preQ1-tRNA) to give epoxyqueuosine (oQ-tRNA). The sequence is that of S-adenosylmethionine:tRNA ribosyltransferase-isomerase from Roseobacter denitrificans (strain ATCC 33942 / OCh 114) (Erythrobacter sp. (strain OCh 114)).